The chain runs to 444 residues: Shufflon protein B' (444 aa).

The constant region stretch occupies residues 1-361 (MKKYDRGWAS…TGAILSCQSG (361 aa)). Positions 362 to 444 (TWRKVGSGEL…GSITVYAICQ (83 aa)) are variable region.

The sequence is that of Shufflon protein B' from Escherichia coli.